Consider the following 527-residue polypeptide: Outer capsid protein VP5 (527 aa).

The involved in membrane permeabilization stretch occupies residues 1–42; the sequence is MGKFIKQLSKFGKKVGGALTSNTAKKIYKTIGDTAVRFAESD.

It belongs to the orbivirus VP5 family.

It is found in the virion. In terms of biological role, VP5 protein is one of the two proteins (with VP2) which constitute the virus particle outer capsid. Acts as a membrane permeabilization protein that mediates release of viral particles from endosomal compartments into the cytoplasm. Permeabilization activity is probably negatively regulated by VP2 and is triggered by endosomal degradation of VP2 and exposure to low pH. The sequence is that of Outer capsid protein VP5 (Segment-6) from Antilocapra americana (Pronghorn).